We begin with the raw amino-acid sequence, 240 residues long: tRNA (guanine-N(7)-)-methyltransferase (240 aa).

The S-adenosyl-L-methionine site is built by Glu-71, Glu-96, Asp-123, and Asp-146. Asp-146 is an active-site residue. Substrate contacts are provided by residues Lys-150, Asp-182, and 219 to 222 (TKFE).

It belongs to the class I-like SAM-binding methyltransferase superfamily. TrmB family.

The catalysed reaction is guanosine(46) in tRNA + S-adenosyl-L-methionine = N(7)-methylguanosine(46) in tRNA + S-adenosyl-L-homocysteine. Its pathway is tRNA modification; N(7)-methylguanine-tRNA biosynthesis. Functionally, catalyzes the formation of N(7)-methylguanine at position 46 (m7G46) in tRNA. The protein is tRNA (guanine-N(7)-)-methyltransferase of Hydrogenovibrio crunogenus (strain DSM 25203 / XCL-2) (Thiomicrospira crunogena).